Reading from the N-terminus, the 564-residue chain is Ferric reductase transmembrane component 1 (564 aa).

N4 carries N-linked (GlcNAc...) asparagine glycosylation. A run of 2 helical transmembrane segments spans residues 10–30 (TVIA…MFWL) and 73–93 (VILT…FIGM). N111 carries an N-linked (GlcNAc...) asparagine glycan. Residues 117–137 (VAARLGFLACGLYVTSYFFSI) traverse the membrane as a helical segment. Residues 121–254 (LGFLACGLYV…VYMKVCVAVY (134 aa)) enclose the Ferric oxidoreductase domain. Residues H157 and H171 each contribute to the heme site. 2 helical membrane passes run 160 to 180 (LSQY…GLAA) and 193 to 213 (IIGY…LPFF). Heme contacts are provided by H225 and H239. The FAD-binding FR-type domain occupies 255-410 (VFDRGCRMLR…DGPYGPVSNP (156 aa)). A glycan (N-linked (GlcNAc...) asparagine) is linked at N268. 317-323 (HPFTIAS) is a binding site for FAD. N-linked (GlcNAc...) asparagine glycosylation occurs at N360. Residues S362, S381, and S383 each carry the phosphoserine modification. Residues 417–437 (LFLFAGGVGVSYILPIILDTI) form a helical membrane-spanning segment. 419–427 (LFAGGVGVS) is an NAD(+) binding site. N-linked (GlcNAc...) asparagine glycosylation is present at N501.

Belongs to the ferric reductase (FRE) family. The cofactor is FAD. Requires heme as cofactor.

It is found in the cell membrane. It carries out the reaction 2 a Fe(II)-siderophore + NADP(+) + H(+) = 2 a Fe(III)-siderophore + NADPH. Metalloreductase responsible for reducing extracellular iron and copper prior to import. Catalyzes the reductive uptake of Fe(3+)-salts and Fe(3+) bound to catecholate or hydroxamate siderophores. Fe(3+) is reduced to Fe(2+), which then dissociates from the siderophore and can be imported by the high-affinity Fe(2+) transport complex in the plasma membrane. Also participates in Cu(2+) reduction and Cu(+) uptake. This is Ferric reductase transmembrane component 1 (frp1) from Schizosaccharomyces pombe (strain 972 / ATCC 24843) (Fission yeast).